The chain runs to 299 residues: GTPase Era (299 aa).

The 169-residue stretch at 9 to 177 (RSGSVAVIGR…VGDLLKLVPE (169 aa)) folds into the Era-type G domain. Positions 17-24 (GRPNVGKS) are G1. 17-24 (GRPNVGKS) serves as a coordination point for GTP. A G2 region spans residues 43 to 47 (QTTRH). The segment at 64 to 67 (DTPG) is G3. Residues 64-68 (DTPGL) and 126-129 (NKVD) each bind GTP. A G4 region spans residues 126–129 (NKVD). Residues 156–158 (VSA) form a G5 region. The region spanning 200–284 (VREQLMRQLG…FLETWVRVRE (85 aa)) is the KH type-2 domain.

Belongs to the TRAFAC class TrmE-Era-EngA-EngB-Septin-like GTPase superfamily. Era GTPase family. Monomer.

Its subcellular location is the cytoplasm. It is found in the cell inner membrane. In terms of biological role, an essential GTPase that binds both GDP and GTP, with rapid nucleotide exchange. Plays a role in 16S rRNA processing and 30S ribosomal subunit biogenesis and possibly also in cell cycle regulation and energy metabolism. The chain is GTPase Era from Xanthomonas axonopodis pv. citri (strain 306).